A 554-amino-acid chain; its full sequence is MASSQVGDMVNGNAEPTRHLAKFPPSLWGDRFTSFTLDKQLWDKYGNEIEVLKEQVRSMVVAGGRKAAEQINLINVLERLGVSYHFEKEIEEQLEQLFAKFEDNEDYDLFTIALHFRIFRQHGYKMSCDVFNKFRDSNGEFKETVSNDVRGMLSLYEATYLKIRGEGFLDEAHAFTIAQLESLVGGPHLSSDLSEQVMHALKQSIHRGFPRLEAKHFISFYEKDAARNETLLRLAKLDFNQLQLSHREELCHIFRWWKELDLISKVPYARDRAVECFFWSTCAYYEPQHSVGRAVLTKIVLLLSVTDDTYDAYGTYDELKLYTNAVQRWDASAMDELPDYMKTLYRALLNVYDEVERDLAKQGRAYGVHHSKEAFKEIVRSYEIEAEWFKEGYVASFEEYMKNALVTSTGRLHTTSCFMGLEADVATTEAFEWILTKPKMVAASGAIGRLVDDVMSNDEEQERGHVATGLDCYMKQHGVSKQEAIVELYKMIENAWRDINEEMLKPTAISMKLLIHVLNLSRISDVVYKYVDGYTHPEIIKDHVISLFEDPIPM.

Residues R270, D307, D311, R449, and D452 each coordinate (2E,6E)-farnesyl diphosphate. 2 residues coordinate Mg(2+): D307 and D311. Residues 307–311 carry the DDXXD motif motif; sequence DDTYD. Residues D452, S456, and E460 each coordinate Mg(2+).

This sequence belongs to the terpene synthase family. Requires Mg(2+) as cofactor. In terms of tissue distribution, specifically expressed in flowers.

It catalyses the reaction (2E,6E)-farnesyl diphosphate + H2O = (2E,6E)-hedycaryol + diphosphate. It functions in the pathway secondary metabolite biosynthesis; terpenoid biosynthesis. In terms of biological role, sesquiterpene synthase that catalyzes the formation of sesquiterpenes and sesquiterpenoid alcohols. Converts farnesyl diphosphate (FPP) to hedycaryol. Hedycaryol is likely to be one of the terpenes that attract insects for pollination of Camellia brevistyla. This Camellia brevistyla protein is Hedycaryol synthase.